The chain runs to 407 residues: Arginine deiminase (407 aa).

The active-site Amidino-cysteine intermediate is C397.

The protein belongs to the arginine deiminase family.

It is found in the cytoplasm. It catalyses the reaction L-arginine + H2O = L-citrulline + NH4(+). The protein operates within amino-acid degradation; L-arginine degradation via ADI pathway; carbamoyl phosphate from L-arginine: step 1/2. This is Arginine deiminase from Limosilactobacillus fermentum (strain NBRC 3956 / LMG 18251) (Lactobacillus fermentum).